The chain runs to 309 residues: Zinc finger CCCH domain-containing protein 31 (309 aa).

A disordered region spans residues 1-36 (MEGAGAARKRSRPDTANGGAAGGKRSRETESFQTGL). 2 consecutive C3H1-type zinc fingers follow at residues 37 to 65 (SSKLKPCTKFFSTIGCPFGEGCHFSHFVP) and 103 to 131 (SGKTRMCTKYNTAEGCKFGDKCHFAHGER). The disordered stretch occupies residues 86 to 106 (ARAPMDHAAGGNSHPASSGKT). A KH domain is found at 175–239 (SATAKISVDA…DQIKQASNMV (65 aa)). The tract at residues 249–273 (STPAKKPAGSAAGAAPAGRGGPGGR) is disordered. Residues 251–265 (PAKKPAGSAAGAAPA) are compositionally biased toward low complexity. The C3H1-type 3 zinc-finger motif lies at 275 to 302 (NYKTKLCENFVKGTCTFGDRCHFAHGEN).

The polypeptide is Zinc finger CCCH domain-containing protein 31 (Oryza sativa subsp. japonica (Rice)).